The following is a 188-amino-acid chain: MSMPTMTLVNQLLIALPSMPDPHFARGVALICQHDSNGSMGVVLNRPSEYTLGEVLFQMGIETASETLREQVVLAGGPVHPDRGFVIYDSEHVWGPSLLIGDGLYLTTSRDVLTAMAEGSGPSRALVALGCAGWAAGQLELELVENNWLMVPADASLLFDTALEQRWQRAAGRIGVDLFRLTDYTGHA.

This sequence belongs to the UPF0301 (AlgH) family.

The polypeptide is UPF0301 protein XF_2228 (Xylella fastidiosa (strain 9a5c)).